Here is a 640-residue protein sequence, read N- to C-terminus: MASVTSYPLLEQIDSPERLRRLPESDLETLAEELRDFLLHSVARSGGHLAAGLGTIELTIALHYIFATPEDRLVWDVGHQAYPHKVLTGRRERLGTIRQAGGLAPFPSRHESPYDTFGVGHSSTSISAALGMAIAANEKGEKRKTVAIIGDGGMTAGMAYEALDHAGALGADLLVILNDNEMSISPNVGAISSYLTRLLSGRVYSTVREGSKKVLERMPPPMWELARRTEEHVKGMVAPGTLFEEMGFNYFGPIDGHDLSSLIRTLRNLHKLTGPRLLHIVTCKGKGYTLAEENPVTYHGVTPFDPKVGIQQGPQKPSSAMSYTQVFSQWLCDMAAQDGLLVGITPAMREGSGLVKFSECFPERYFDVAIAEQHSVTLAAGMACDGLKPVVAIYSTFLQRAYDQLIHDVALQNLPVLFAIDRAGVVGPDGPTHAGSFDLTYLRCIPNLVVMAPADENECRQMLYTGFLLNQPAAVRYPRGKGPGVAVEASMTALPLGKAELKRKGRGIAILAFGATVAPALEAAEKLDATVVNMRFVKPLDEDLVLEMAMNHELLVTVEDNVIAGGAGSAVSECLAYHGVSVPLLLHGLPDNFLEHGSREALLEQCHLNAEGILQRVKTYRARLPKSKASVVSSAAGTHG.

Thiamine diphosphate contacts are provided by residues His-79 and 120–122; that span reads GHS. Asp-151 is a binding site for Mg(2+). Thiamine diphosphate-binding positions include 152–153, Asn-180, Tyr-288, and Glu-372; that span reads GG. Mg(2+) is bound at residue Asn-180.

The protein belongs to the transketolase family. DXPS subfamily. Homodimer. It depends on Mg(2+) as a cofactor. Thiamine diphosphate is required as a cofactor.

The catalysed reaction is D-glyceraldehyde 3-phosphate + pyruvate + H(+) = 1-deoxy-D-xylulose 5-phosphate + CO2. The protein operates within metabolic intermediate biosynthesis; 1-deoxy-D-xylulose 5-phosphate biosynthesis; 1-deoxy-D-xylulose 5-phosphate from D-glyceraldehyde 3-phosphate and pyruvate: step 1/1. Functionally, catalyzes the acyloin condensation reaction between C atoms 2 and 3 of pyruvate and glyceraldehyde 3-phosphate to yield 1-deoxy-D-xylulose-5-phosphate (DXP). This is 1-deoxy-D-xylulose-5-phosphate synthase from Nitrosococcus oceani (strain ATCC 19707 / BCRC 17464 / JCM 30415 / NCIMB 11848 / C-107).